We begin with the raw amino-acid sequence, 272 residues long: Probable proteasome subunit alpha type-6 (272 aa).

The segment covering 243–261 (AARASRAAAEEPQAPTAEA) has biased composition (low complexity). The disordered stretch occupies residues 243–272 (AARASRAAAEEPQAPTAEAILDSADAMETD).

It belongs to the peptidase T1A family. As to quaternary structure, the 26S proteasome consists of a 20S proteasome core and two 19S regulatory subunits. The 20S proteasome core is composed of 28 subunits that are arranged in four stacked rings, resulting in a barrel-shaped structure. The two end rings are each formed by seven alpha subunits, and the two central rings are each formed by seven beta subunits. The catalytic chamber with the active sites is on the inside of the barrel.

It is found in the cytoplasm. The protein resides in the nucleus. The proteasome is a multicatalytic proteinase complex which is characterized by its ability to cleave peptides with Arg, Phe, Tyr, Leu, and Glu adjacent to the leaving group at neutral or slightly basic pH. The proteasome has an ATP-dependent proteolytic activity. This is Probable proteasome subunit alpha type-6 from Schizosaccharomyces pombe (strain 972 / ATCC 24843) (Fission yeast).